Reading from the N-terminus, the 218-residue chain is Small ribosomal subunit protein uS5 (218 aa).

Over residues 1-10 the composition is skewed to polar residues; that stretch reads MTQATNQTPG. A disordered region spans residues 1–63; the sequence is MTQATNQTPG…GRDERDSEWQ (63 aa). Residues 11-25 are compositionally biased toward low complexity; it reads QDVPGAADVPAAAEG. Residues 31–63 show a composition bias toward basic and acidic residues; the sequence is GERRGGGGGRGGDRRGRGDRRGRGRDERDSEWQ. Positions 62-125 constitute an S5 DRBM domain; sequence WQERVIQIRR…ADGKKHLVKV (64 aa).

This sequence belongs to the universal ribosomal protein uS5 family. Part of the 30S ribosomal subunit. Contacts proteins S4 and S8.

In terms of biological role, with S4 and S12 plays an important role in translational accuracy. Located at the back of the 30S subunit body where it stabilizes the conformation of the head with respect to the body. The chain is Small ribosomal subunit protein uS5 from Synechococcus sp. (strain RCC307).